A 417-amino-acid chain; its full sequence is Glucose-1-phosphate adenylyltransferase (417 aa).

Residues Tyr98, Gly163, 178–179, and Ser197 each bind alpha-D-glucose 1-phosphate; that span reads EK.

Belongs to the bacterial/plant glucose-1-phosphate adenylyltransferase family. Homotetramer.

It catalyses the reaction alpha-D-glucose 1-phosphate + ATP + H(+) = ADP-alpha-D-glucose + diphosphate. It participates in glycan biosynthesis; glycogen biosynthesis. Involved in the biosynthesis of ADP-glucose, a building block required for the elongation reactions to produce glycogen. Catalyzes the reaction between ATP and alpha-D-glucose 1-phosphate (G1P) to produce pyrophosphate and ADP-Glc. The chain is Glucose-1-phosphate adenylyltransferase from Koribacter versatilis (strain Ellin345).